Reading from the N-terminus, the 131-residue chain is Holo-[acyl-carrier-protein] synthase (131 aa).

Aspartate 8 and glutamate 63 together coordinate Mg(2+).

This sequence belongs to the P-Pant transferase superfamily. AcpS family. It depends on Mg(2+) as a cofactor.

It is found in the cytoplasm. The catalysed reaction is apo-[ACP] + CoA = holo-[ACP] + adenosine 3',5'-bisphosphate + H(+). Its function is as follows. Transfers the 4'-phosphopantetheine moiety from coenzyme A to a Ser of acyl-carrier-protein. This is Holo-[acyl-carrier-protein] synthase from Shewanella piezotolerans (strain WP3 / JCM 13877).